The sequence spans 231 residues: Killer cell lectin-like receptor subfamily F member 1 (231 aa).

Residues 1 to 38 are Cytoplasmic-facing; that stretch reads MQDEERYMTLNVQSKKRSSAQTSQLTFKDYSVTLHWYK. A Phosphotyrosine modification is found at Tyr-7. A helical; Signal-anchor for type II membrane protein transmembrane segment spans residues 39–59; that stretch reads ILLGISGTVNGILTLTLISLI. Topologically, residues 60–231 are extracellular; that stretch reads LLVSQGVLLK…SSVFKWICQY (172 aa). N-linked (GlcNAc...) asparagine glycans are attached at residues Asn-77, Asn-91, Asn-96, and Asn-176. The C-type lectin domain maps to 121 to 230; that stretch reads YQGKCYWFSN…CSSVFKWICQ (110 aa). Cystine bridges form between Cys-142–Cys-229 and Cys-208–Cys-221.

As to quaternary structure, homodimer. Interacts with CLEC2B. Post-translationally, phosphorylated on Tyr-7; this phosphorylation is required for NKp80/KLRF1-mediated cytotoxicity. As to expression, strongly expressed in peripheral blood leukocytes and spleen, with weaker expression in lymph node and adult liver, and no expression detected in bone marrow, thymus, and fetal liver. Not expressed in brain, heart, placenta, lung, kidney, skeletal muscle, and pancreas. Within peripheral blood leukocyte and immunocyte cell lines, expression was predominant in NK cells but was also detected in monocytes.

Its subcellular location is the membrane. In terms of biological role, functions as an activating receptor involved in immunosurveillance upon binding to various ligands displayed at the surface of myeloid cells. Upon interaction with CLEC2B ligand, stimulates NK-cell cytotoxicity and cytokine production leading to the cytolysis of malignant CLEC2B-expressing myeloid cells. Actviation of the common cytotoxicity pathway involves SRC and SYK kinases. In Homo sapiens (Human), this protein is Killer cell lectin-like receptor subfamily F member 1 (KLRF1).